Reading from the N-terminus, the 535-residue chain is Growth-regulating factor 2 (535 aa).

One can recognise a QLQ domain in the interval 164–199 (PFTLTQWAELEQQALIYKYITANVPVPSSLLISIKK). The 45-residue stretch at 227–271 (DPEPGRCRRTDGKKWRCSRDAVPDQKYCERHINRGRHRSRKPVEV) folds into the WRC domain. 2 short sequence motifs (bipartite nuclear localization signal) span residues 232–242 (RCRRTDGKKWR) and 260–267 (RGRHRSRK). Disordered stretches follow at residues 260 to 308 (RGRH…ASSN), 417 to 437 (PIAS…EKTT), and 514 to 535 (SSVS…HYTT). Polar residues predominate over residues 272 to 291 (QSGQNQTAAAASKAVTTPQQ). Positions 299-308 (NRSNARASSN) are enriched in low complexity. Over residues 426-437 (THNNNNAQEKTT) the composition is skewed to polar residues.

Belongs to the GRF family. As to quaternary structure, interacts with GIF1. As to expression, strongly expressed in actively growing and developing tissues, such as roots, upper stems, and shoot tips containing the shoot apical meristem (SAM) and flower buds. Detected in young leaf primordium. Also expressed in mature flowers, but weakly expressed in mature stems and leaves.

Its subcellular location is the nucleus. In terms of biological role, transcription activator that plays a role in the regulation of cell expansion in leaf and cotyledons tissues. Component of a network formed by miR396, the GRFs and their interacting factors (GIFs) acting in the regulation of meristem function, at least partially through the control of cell proliferation. In Arabidopsis thaliana (Mouse-ear cress), this protein is Growth-regulating factor 2 (GRF2).